The chain runs to 221 residues: ATP-dependent dethiobiotin synthetase BioD (221 aa).

11-16 (DIGKTL) serves as a coordination point for ATP. Mg(2+) is bound at residue Thr15. Lys35 is an active-site residue. Position 39 (Thr39) interacts with substrate. ATP-binding positions include Asp44 and 103-106 (EGAG). Residues Asp44 and Glu103 each contribute to the Mg(2+) site.

This sequence belongs to the dethiobiotin synthetase family. Homodimer. The cofactor is Mg(2+).

The protein localises to the cytoplasm. It carries out the reaction (7R,8S)-7,8-diammoniononanoate + CO2 + ATP = (4R,5S)-dethiobiotin + ADP + phosphate + 3 H(+). It functions in the pathway cofactor biosynthesis; biotin biosynthesis; biotin from 7,8-diaminononanoate: step 1/2. Catalyzes a mechanistically unusual reaction, the ATP-dependent insertion of CO2 between the N7 and N8 nitrogen atoms of 7,8-diaminopelargonic acid (DAPA, also called 7,8-diammoniononanoate) to form a ureido ring. This Leptospira borgpetersenii serovar Hardjo-bovis (strain L550) protein is ATP-dependent dethiobiotin synthetase BioD.